Here is a 697-residue protein sequence, read N- to C-terminus: Elongation factor G (697 aa).

One can recognise a tr-type G domain in the interval alanine 10–leucine 285. GTP is bound by residues alanine 19 to threonine 26, aspartate 83 to histidine 87, and asparagine 137 to aspartate 140.

It belongs to the TRAFAC class translation factor GTPase superfamily. Classic translation factor GTPase family. EF-G/EF-2 subfamily.

Its subcellular location is the cytoplasm. Functionally, catalyzes the GTP-dependent ribosomal translocation step during translation elongation. During this step, the ribosome changes from the pre-translocational (PRE) to the post-translocational (POST) state as the newly formed A-site-bound peptidyl-tRNA and P-site-bound deacylated tRNA move to the P and E sites, respectively. Catalyzes the coordinated movement of the two tRNA molecules, the mRNA and conformational changes in the ribosome. The chain is Elongation factor G from Lactobacillus helveticus (strain DPC 4571).